A 381-amino-acid polypeptide reads, in one-letter code: Protein COS8 (381 aa).

Residues 1-42 (MKENEVKDEKSVDVLSFKQLEFQKTVLPQDVFRNELTWFCYE) lie on the Extracellular side of the membrane. A helical transmembrane segment spans residues 43–63 (IYKSLAFRIWMLLWLPLSVWW). Residues 64–72 (KLSSNWIHP) are Cytoplasmic-facing. Residues 73 to 93 (LIVSLLVLFLGPFFVLVICGL) form a helical membrane-spanning segment. Over 94–237 (SRKRSLSKQL…WILKRIFNLR (144 aa)) the chain is Extracellular. A helical membrane pass occupies residues 238 to 258 (CLPLFLYYFLIVYTSGNADLI). At 259–381 (SRFLFPVVMF…QSARNEKPLK (123 aa)) the chain is on the cytoplasmic side.

It belongs to the DUP/COS family.

Its subcellular location is the membrane. This chain is Protein COS8 (COS8), found in Saccharomyces cerevisiae (strain ATCC 204508 / S288c) (Baker's yeast).